A 152-amino-acid chain; its full sequence is Superoxide dismutase [Cu-Zn] 5 (152 aa).

3 residues coordinate Cu cation: His-44, His-46, and His-61. Cys-55 and Cys-144 are joined by a disulfide. Positions 61, 69, 78, and 81 each coordinate Zn(2+). His-118 contributes to the Cu cation binding site.

This sequence belongs to the Cu-Zn superoxide dismutase family. It depends on Cu cation as a cofactor. Zn(2+) is required as a cofactor.

It catalyses the reaction 2 superoxide + 2 H(+) = H2O2 + O2. Destroys radicals which are normally produced within the cells and which are toxic to biological systems. The polypeptide is Superoxide dismutase [Cu-Zn] 5 (sodE) (Dictyostelium discoideum (Social amoeba)).